The primary structure comprises 346 residues: 2,5-dichlorohydroquinone reductive dechlorinase (346 aa).

Residues 43–154 enclose the GST N-terminal domain; the sequence is PRFELFHFVF…YLCDALSGGT (112 aa). One can recognise a GST C-terminal domain in the interval 189–335; it reads DRRPESMQAV…AIIQWPGHPP (147 aa).

Belongs to the GST superfamily.

The catalysed reaction is 2,5-dichlorohydroquinone + 2 glutathione = chlorohydroquinone + glutathione disulfide + chloride + H(+). The enzyme catalyses chlorohydroquinone + 2 glutathione = hydroquinone + glutathione disulfide + chloride + H(+). Its pathway is xenobiotic degradation; gamma-hexachlorocyclohexane degradation. Catalyzes the degradation of 2,5-dichlorohydroquinone (2,5-DCHQ) into hydroquinone (HQ) via chlorohydroquinone (CHQ). Is involved in the degradation pathway that allows S.japonicum UT26 to grow on gamma-hexachlorocyclohexane (gamma-HCH or lindane) as the sole source of carbon and energy. However, the conversion of CHQ to HQ by LinD seems not to be essential for this degradation pathway, because the conversion rate of CHQ to HQ is much lower than that of 2,5-DCHQ to CHQ. CHQ is more efficiently degraded by LinE in strain UT26. This Sphingobium indicum (strain DSM 16413 / CCM 7287 / MTCC 6362 / UT26 / NBRC 101211 / UT26S) (Sphingobium japonicum) protein is 2,5-dichlorohydroquinone reductive dechlorinase.